A 356-amino-acid polypeptide reads, in one-letter code: Zinc finger CW-type PWWP domain protein 2 (356 aa).

The segment at 24 to 79 (MYVNKVWVQCENENCLKWRLLSSEDSAKVDHDEPWYCFMNTDSRYNNCSISEEDFP) adopts a CW-type zinc-finger fold. Zn(2+) is bound by residues Cys-33, Cys-38, Cys-60, and Cys-71. Residues 98–162 (LGSLVLVKLQ…ATFVGHYSIT (65 aa)) form the PWWP domain. The disordered stretch occupies residues 279–307 (QALQPTATPDESEEGHGEEINMGEKLSKC).

Histone methylation reader which binds to non-methylated (H3K4me0), monomethylated (H3K4me1), dimethylated (H3K4me2) and trimethylated (H3K4me3) 'Lys-4' on histone H3. The order of binding preference is H3K4me3 &gt; H3K4me2 &gt; H3K4me1 &gt; H3K4me0. This is Zinc finger CW-type PWWP domain protein 2 (ZCWPW2) from Homo sapiens (Human).